Reading from the N-terminus, the 253-residue chain is Isoprenyl transferase (253 aa).

The active site involves aspartate 32. Mg(2+) is bound at residue aspartate 32. Substrate is bound by residues glycine 33–arginine 36, tryptophan 37, arginine 45, histidine 49, and serine 77–glutamate 79. The active-site Proton acceptor is asparagine 80. Residues tryptophan 81, arginine 83, arginine 200, and arginine 206–serine 208 contribute to the substrate site. Glutamate 219 serves as a coordination point for Mg(2+).

The protein belongs to the UPP synthase family. In terms of assembly, homodimer. Mg(2+) serves as cofactor.

Its function is as follows. Catalyzes the condensation of isopentenyl diphosphate (IPP) with allylic pyrophosphates generating different type of terpenoids. The polypeptide is Isoprenyl transferase (Clostridium perfringens (strain 13 / Type A)).